Consider the following 280-residue polypeptide: Homeobox protein Hox-B1b (280 aa).

Residues Gly-46–His-65 are disordered. The short motif at Thr-170–Lys-175 is the Antp-type hexapeptide element. Positions His-195–Glu-254 form a DNA-binding region, homeobox. The segment at Lys-249–Pro-280 is disordered. Over residues Val-261–Pro-280 the composition is skewed to basic and acidic residues.

It belongs to the Antp homeobox family. Labial subfamily.

It localises to the nucleus. In terms of biological role, sequence-specific transcription factor which is part of a developmental regulatory system that provides cells with specific positional identities on the anterior-posterior axis. The chain is Homeobox protein Hox-B1b (hoxb1b) from Takifugu rubripes (Japanese pufferfish).